The chain runs to 1070 residues: DNA-directed RNA polymerase subunit beta (1070 aa).

Belongs to the RNA polymerase beta chain family. In terms of assembly, in plastids the minimal PEP RNA polymerase catalytic core is composed of four subunits: alpha, beta, beta', and beta''. When a (nuclear-encoded) sigma factor is associated with the core the holoenzyme is formed, which can initiate transcription.

It localises to the plastid. Its subcellular location is the chloroplast. It catalyses the reaction RNA(n) + a ribonucleoside 5'-triphosphate = RNA(n+1) + diphosphate. Its function is as follows. DNA-dependent RNA polymerase catalyzes the transcription of DNA into RNA using the four ribonucleoside triphosphates as substrates. This chain is DNA-directed RNA polymerase subunit beta, found in Angiopteris evecta (Mule's foot fern).